Reading from the N-terminus, the 504-residue chain is Glycerol kinase (504 aa).

Thr14 provides a ligand contact to ADP. 3 residues coordinate ATP: Thr14, Thr15, and Ser16. Thr14 serves as a coordination point for sn-glycerol 3-phosphate. Residue Arg18 participates in ADP binding. Sn-glycerol 3-phosphate-binding residues include Arg84, Glu85, and Tyr136. Glycerol is bound by residues Arg84, Glu85, and Tyr136. His232 is subject to Phosphohistidine; by HPr. Asp246 contacts sn-glycerol 3-phosphate. Glycerol-binding residues include Asp246 and Gln247. ADP is bound by residues Thr268 and Gly311. ATP-binding residues include Thr268, Gly311, Gln315, and Gly412. Gly412 and Asn416 together coordinate ADP.

This sequence belongs to the FGGY kinase family. In terms of assembly, homotetramer and homodimer (in equilibrium). In terms of processing, the phosphoenolpyruvate-dependent sugar phosphotransferase system (PTS), including enzyme I, and histidine-containing protein (HPr) are required for the phosphorylation, which leads to the activation of the enzyme.

The catalysed reaction is glycerol + ATP = sn-glycerol 3-phosphate + ADP + H(+). It participates in polyol metabolism; glycerol degradation via glycerol kinase pathway; sn-glycerol 3-phosphate from glycerol: step 1/1. Its activity is regulated as follows. Activated by phosphorylation and inhibited by fructose 1,6-bisphosphate (FBP). Its function is as follows. Key enzyme in the regulation of glycerol uptake and metabolism. Catalyzes the phosphorylation of glycerol to yield sn-glycerol 3-phosphate. The sequence is that of Glycerol kinase from Streptococcus pyogenes serotype M6 (strain ATCC BAA-946 / MGAS10394).